The chain runs to 187 residues: Photosystem I assembly protein Ycf4 (187 aa).

The next 2 helical transmembrane spans lie at 21-43 and 69-91; these read LSNY…AGIS and LLYG…WNVG.

The protein belongs to the Ycf4 family.

It localises to the plastid. It is found in the cyanelle thylakoid membrane. Functionally, seems to be required for the assembly of the photosystem I complex. The polypeptide is Photosystem I assembly protein Ycf4 (Cyanophora paradoxa).